The chain runs to 231 residues: Ninja-family protein AFP3 (231 aa).

Over residues alanine 83–alanine 96 the composition is skewed to basic residues. Residues alanine 83 to glycine 152 form a disordered region. Polar residues predominate over residues glutamine 130–glycine 152.

This sequence belongs to the Ninja family. Forms a heterodimer with AFP2. Interacts with ABI5/DPBF1, DPBF2, AREB3/DPBF3, EEL/DPBF4, ABF1, ABF3/DPBF5 and ABF4/AREB2.

It is found in the nucleus. Its function is as follows. Acts as a negative regulator of abscisic acid (ABA) response and stress responses. This Arabidopsis thaliana (Mouse-ear cress) protein is Ninja-family protein AFP3 (AFP3).